We begin with the raw amino-acid sequence, 491 residues long: Cobyric acid synthase (491 aa).

The GATase cobBQ-type domain maps to 250-439 (ELNIIVIRLP…LHGIFDNGSW (190 aa)). Cysteine 331 (nucleophile) is an active-site residue. Histidine 431 is a catalytic residue.

The protein belongs to the CobB/CobQ family. CobQ subfamily.

Its pathway is cofactor biosynthesis; adenosylcobalamin biosynthesis. Its function is as follows. Catalyzes amidations at positions B, D, E, and G on adenosylcobyrinic A,C-diamide. NH(2) groups are provided by glutamine, and one molecule of ATP is hydrogenolyzed for each amidation. In Microcystis aeruginosa (strain NIES-843 / IAM M-2473), this protein is Cobyric acid synthase.